The following is a 284-amino-acid chain: RNase adapter protein RapZ (284 aa).

8-15 (GRSGSGKS) lines the ATP pocket. 56–59 (DVRN) is a binding site for GTP. The segment at 266-284 (RSRGKNAQSRHRTLEKSKS) is RNA-binding.

Belongs to the RapZ-like family. RapZ subfamily. Homotrimer.

Functionally, modulates the synthesis of GlmS, by affecting the processing and stability of the regulatory small RNA GlmZ. When glucosamine-6-phosphate (GlcN6P) concentrations are high in the cell, RapZ binds GlmZ and targets it to cleavage by RNase E. Consequently, GlmZ is inactivated and unable to activate GlmS synthesis. Under low GlcN6P concentrations, RapZ is sequestered and inactivated by an other regulatory small RNA, GlmY, preventing GlmZ degradation and leading to synthesis of GlmS. The protein is RNase adapter protein RapZ of Sodalis glossinidius (strain morsitans).